A 160-amino-acid chain; its full sequence is Sec-independent protein translocase protein TatB (160 aa).

A helical membrane pass occupies residues 1–21 (MFGMGFFEILVVLVVAIIFLG). The interval 118–160 (HLNEEVSNEEALNKEVSSDESPKEVQLATDNNTKEHDKEKENV) is disordered. 2 stretches are compositionally biased toward basic and acidic residues: residues 128-140 (ALNK…ESPK) and 149-160 (NTKEHDKEKENV).

This sequence belongs to the TatB family. As to quaternary structure, the Tat system comprises two distinct complexes: a TatABC complex, containing multiple copies of TatA, TatB and TatC subunits, and a separate TatA complex, containing only TatA subunits. Substrates initially bind to the TatABC complex, which probably triggers association of the separate TatA complex to form the active translocon.

It localises to the cell inner membrane. Its function is as follows. Part of the twin-arginine translocation (Tat) system that transports large folded proteins containing a characteristic twin-arginine motif in their signal peptide across membranes. Together with TatC, TatB is part of a receptor directly interacting with Tat signal peptides. TatB may form an oligomeric binding site that transiently accommodates folded Tat precursor proteins before their translocation. The sequence is that of Sec-independent protein translocase protein TatB from Helicobacter pylori (strain ATCC 700392 / 26695) (Campylobacter pylori).